The following is a 684-amino-acid chain: Protein EXECUTER 1, chloroplastic (684 aa).

Polar residues predominate over residues 1–31 (MPSLSTPPSQNLAFSPAASATSSRLTPSSKR). Residues 1–46 (MPSLSTPPSQNLAFSPAASATSSRLTPSSKRSFYPHRLPDPTALCR) constitute a chloroplast transit peptide. The tract at residues 1 to 66 (MPSLSTPPSQ…SSSSSDDNPR (66 aa)) is disordered. The span at 48 to 61 (SSSSGSNSSSSSSS) shows a compositional bias: low complexity. The UVR domain occupies 127–162 (DRLLSVLKSQLNRAIKREDYEDAARLKVAIAATATN). Residues 278–318 (TLTPGRFLTSPGRKEDTGNLAVESSEDEESDNSDDDSDLLE) form a disordered region. Acidic residues predominate over residues 301-318 (SSEDEESDNSDDDSDLLE).

It is found in the plastid. The protein resides in the chloroplast. In terms of biological role, together with EX2, enables higher plants to perceive singlet oxygen as a stress signal in plastid that activates a genetically determined nuclear stress response program which triggers a programmed cell death (PCD). This transfer of singlet oxygen-induced stress-related signals from the plastid to the nucleus that triggers genetically controlled PCD pathway is unique to photosynthetic eukaryotes and operates under mild stress conditions, impeding photosystem II (PSII) without causing photooxidative damage of the plant. The polypeptide is Protein EXECUTER 1, chloroplastic (Arabidopsis thaliana (Mouse-ear cress)).